Consider the following 194-residue polypeptide: SAYSvFN domain-containing protein 1 (194 aa).

Residues 1–10 show a composition bias toward basic and acidic residues; sequence MEQRLAEFRA. Disordered regions lie at residues 1–43 and 58–104; these read MEQR…TPKA and PPSA…LTPR. Residues 1 to 116 are Cytoplasmic-facing; it reads MEQRLAEFRA…SLLTSVTLLK (116 aa). Over residues 22-32 the composition is skewed to polar residues; that stretch reads SASSQSTQTSG. Pro residues predominate over residues 82–101; it reads PWSPAEEAPPPPQPPPPQPL. A middle helical (MH) region spans residues 102–116; that stretch reads TPRDRSLLTSVTLLK. Residues 117 to 137 constitute an intramembrane region (helical); that stretch reads VLLWLVLLGLFVELEFGLAYF. Over 138–194 the chain is Cytoplasmic; sequence VLSLFYWMYVGMRGPEEKMQGEKSAYSVFNPGCEAIQGSLTAEQLERELHLRPLPRR.

It belongs to the SAYSD1 family. As to quaternary structure, associates (via N-terminus) with ribosomes.

The protein localises to the endoplasmic reticulum membrane. It is found in the cytoplasmic vesicle membrane. Ufmylation 'reader' component of a translocation-associated quality control pathway, a mechanism that takes place when a ribosome has stalled during translation, and which is required to degrade clogged substrates. Specifically recognizes and binds ufmylated ribosomes when a ribosome has stalled, promoting the transport of stalled nascent chain via the TRAPP complex to lysosomes for degradation. The chain is SAYSvFN domain-containing protein 1 (SAYSD1) from Bos taurus (Bovine).